We begin with the raw amino-acid sequence, 355 residues long: Peptide chain release factor 1 (355 aa).

The residue at position 233 (Q233) is an N5-methylglutamine. Residues 280 to 293 (ERRKKEQERADSRR) are compositionally biased toward basic and acidic residues. Residues 280 to 308 (ERRKKEQERADSRRGQVGSGDRSERIRTY) are disordered.

The protein belongs to the prokaryotic/mitochondrial release factor family. In terms of processing, methylated by PrmC. Methylation increases the termination efficiency of RF1.

The protein localises to the cytoplasm. Peptide chain release factor 1 directs the termination of translation in response to the peptide chain termination codons UAG and UAA. In Rickettsia felis (strain ATCC VR-1525 / URRWXCal2) (Rickettsia azadi), this protein is Peptide chain release factor 1.